The chain runs to 465 residues: MKVYNTLTNKKEEFLTLVPGEVKMYVCGPTVYNFFHIGNARTFVVFDTIRRYLEYRGYKVKFIQNFTDIDDKMIKRANEEGSTVKELGDRFIKEYYKDADDLNIERATKNPRATEFMEEIIKFVSDLIEKGYAYEIDGDVYFSTKKFNSYGKLSGQNLEELQLGARINVDERKKDPMDFAIWKSQKPGEPAWESPWGMGRPGWHIECSCMAYNLLGETIDIHAGGSDLSFPHHENEIAQSEARTGKQFAKYWLHSAFVNVNNQKMSKSLNNFFTAREILEKYDADVLRMFMLSGHYRTQINFSMELLDSTKAALDRLYNSINNLENLLDEVKNEELRDEELEYKNELQKYKEKYIEKMDDDFNTADAISIIFDLIRDVNTNVTIESSKELVKYTLDLIRELGSPLGILQESTKASLEEEIEKLIEERQKARKEKNWALADKIRDNLKERGIVLEDTPQGIRWKQI.

A Zn(2+)-binding site is contributed by Cys27. A 'HIGH' region motif is present at residues 29 to 39; that stretch reads PTVYNFFHIGN. Cys207, His232, and Glu236 together coordinate Zn(2+). Positions 264–268 match the 'KMSKS' region motif; that stretch reads KMSKS. Position 267 (Lys267) interacts with ATP.

The protein belongs to the class-I aminoacyl-tRNA synthetase family. As to quaternary structure, monomer. Zn(2+) is required as a cofactor.

The protein resides in the cytoplasm. It carries out the reaction tRNA(Cys) + L-cysteine + ATP = L-cysteinyl-tRNA(Cys) + AMP + diphosphate. This chain is Cysteine--tRNA ligase, found in Clostridium botulinum (strain ATCC 19397 / Type A).